Reading from the N-terminus, the 427-residue chain is MSAIVDIVGREVLDSRGNPTVECDVLLESGVMGRAAVPSGASTGSREAIELRDGDKSRYLGKGVLNAVKNINTEISEAVLGLDAAEQSFLDKTLIDLDGTDNKGRLGANAMLAVSMAVARAAAEESGLPLYRYFGGMGAVQLPVPMMNVINGGAHANNSLDLQEMMIIPVGAPSFREAVRWGAEVFHALKKILHDKGISTAVGDEGGFAPSVESHEAAIQLILQAIDKAGYRAGEQIALGLDCAASEFYKDGKYHLEGEGLSLTAQEWTDMMAAWVDKYPIISIEDGMAEGDWDGWKLLTDRLGKNVQIVGDDLFVTNTKILKEGIEKGIANSILIKINQIGTLSETFAAIEMAKRAGYTAVISHRSGETEDSTIADIAVATNAGQIKTGSMSRSDRMAKYNQLLRIEEDLGDVAVYPGRAAFYNLR.

Gln163 contributes to the (2R)-2-phosphoglycerate binding site. The Proton donor role is filled by Glu205. The Mg(2+) site is built by Asp242, Glu285, and Asp312. Lys337, Arg366, Ser367, and Lys388 together coordinate (2R)-2-phosphoglycerate. The Proton acceptor role is filled by Lys337.

The protein belongs to the enolase family. Mg(2+) serves as cofactor.

It localises to the cytoplasm. The protein resides in the secreted. Its subcellular location is the cell surface. It carries out the reaction (2R)-2-phosphoglycerate = phosphoenolpyruvate + H2O. Its pathway is carbohydrate degradation; glycolysis; pyruvate from D-glyceraldehyde 3-phosphate: step 4/5. Its function is as follows. Catalyzes the reversible conversion of 2-phosphoglycerate (2-PG) into phosphoenolpyruvate (PEP). It is essential for the degradation of carbohydrates via glycolysis. The sequence is that of Enolase from Leptothrix cholodnii (strain ATCC 51168 / LMG 8142 / SP-6) (Leptothrix discophora (strain SP-6)).